The following is a 296-amino-acid chain: Small ribosomal subunit protein uS2 (296 aa).

Positions 246-272 (QAKDGSVVDSGKGKSIAAHKGGGKASK) are disordered.

It belongs to the universal ribosomal protein uS2 family.

The polypeptide is Small ribosomal subunit protein uS2 (Anaplasma phagocytophilum (strain HZ)).